The chain runs to 1080 residues: Carbamoyl phosphate synthase large chain (1080 aa).

The interval Met-1–Glu-403 is carboxyphosphate synthetic domain. The ATP site is built by Arg-129, Arg-169, Gly-175, Gly-176, Glu-208, Val-210, Glu-215, Gly-241, Val-242, His-243, Gln-285, and Glu-299. Residues Arg-133–Val-328 enclose the ATP-grasp 1 domain. Residues Gln-285, Glu-299, and Asn-301 each coordinate Mg(2+). Positions 285, 299, and 301 each coordinate Mn(2+). Positions Thr-404 to Ala-554 are oligomerization domain. Residues Leu-555 to Gly-942 form a carbamoyl phosphate synthetic domain region. The ATP-grasp 2 domain maps to Gln-679–Ala-876. ATP is bound by residues Arg-715, Arg-754, Leu-756, Glu-761, Gly-787, Val-788, His-789, Ser-790, Gln-830, and Glu-847. Mg(2+) is bound by residues Gln-830, Glu-847, and Asn-849. Mn(2+) is bound by residues Gln-830, Glu-847, and Asn-849. The region spanning Ile-943–Ala-1080 is the MGS-like domain. The allosteric domain stretch occupies residues Ile-943–Ala-1080.

This sequence belongs to the CarB family. In terms of assembly, composed of two chains; the small (or glutamine) chain promotes the hydrolysis of glutamine to ammonia, which is used by the large (or ammonia) chain to synthesize carbamoyl phosphate. Tetramer of heterodimers (alpha,beta)4. Mg(2+) is required as a cofactor. The cofactor is Mn(2+).

The enzyme catalyses hydrogencarbonate + L-glutamine + 2 ATP + H2O = carbamoyl phosphate + L-glutamate + 2 ADP + phosphate + 2 H(+). It catalyses the reaction hydrogencarbonate + NH4(+) + 2 ATP = carbamoyl phosphate + 2 ADP + phosphate + 2 H(+). The protein operates within amino-acid biosynthesis; L-arginine biosynthesis; carbamoyl phosphate from bicarbonate: step 1/1. Its pathway is pyrimidine metabolism; UMP biosynthesis via de novo pathway; (S)-dihydroorotate from bicarbonate: step 1/3. Functionally, large subunit of the glutamine-dependent carbamoyl phosphate synthetase (CPSase). CPSase catalyzes the formation of carbamoyl phosphate from the ammonia moiety of glutamine, carbonate, and phosphate donated by ATP, constituting the first step of 2 biosynthetic pathways, one leading to arginine and/or urea and the other to pyrimidine nucleotides. The large subunit (synthetase) binds the substrates ammonia (free or transferred from glutamine from the small subunit), hydrogencarbonate and ATP and carries out an ATP-coupled ligase reaction, activating hydrogencarbonate by forming carboxy phosphate which reacts with ammonia to form carbamoyl phosphate. In Xanthomonas axonopodis pv. citri (strain 306), this protein is Carbamoyl phosphate synthase large chain.